A 218-amino-acid polypeptide reads, in one-letter code: Putative inactive cathepsin L-like protein CTSL3P (218 aa).

2 disordered regions span residues 144-173 (GDWK…EVAQ) and 195-218 (GDED…EAQV). The span at 201 to 212 (EDKWPHDMRNHL) shows a compositional bias: basic and acidic residues.

Belongs to the peptidase C1 family.

In Homo sapiens (Human), this protein is Putative inactive cathepsin L-like protein CTSL3P (CTSL3P).